A 357-amino-acid chain; its full sequence is Red-sensitive opsin-1 (357 aa).

Residues 1–49 are Extracellular-facing; it reads MAEHWGDAIYAARRKGDETTREAMFTYTNSNNTKDPFEGPNYHIAPRWV. Asn-31 carries N-linked (GlcNAc...) asparagine glycosylation. The chain crosses the membrane as a helical span at residues 50 to 74; the sequence is YNVATVWMFFVVVASTFTNGLVLVA. Topologically, residues 75-86 are cytoplasmic; sequence TAKFKKLRHPLN. A helical membrane pass occupies residues 87–112; sequence WILVNLAIADLGETLFASTISVINQF. Residues 113-126 are Extracellular-facing; that stretch reads FGYFILGHPMCIFE. Cys-123 and Cys-200 are joined by a disulfide. The chain crosses the membrane as a helical span at residues 127-146; it reads GYTVSVCGIAALWSLTVISW. Over 147–165 the chain is Cytoplasmic; sequence ERWVVVCKPFGNVKFDAKW. A helical membrane pass occupies residues 166-189; it reads ASAGIIFSWVWAAAWCAPPIFGWS. The Extracellular segment spans residues 190 to 215; it reads RYWPHGLKTSCGPDVFSGSEDPGVQS. Residues 216–243 traverse the membrane as a helical segment; it reads YMVVLMITCCIIPLAIIILCYIAVYLAI. Topologically, residues 244–265 are cytoplasmic; sequence HAVAQQQKDSESTQKAEKEVSR. A helical transmembrane segment spans residues 266 to 289; the sequence is MVVVMIFAYCFCWGPYTFFACFAA. At 290–297 the chain is on the extracellular side; it reads ANPGYAFH. The helical transmembrane segment at 298-322 threads the bilayer; it reads PLAAAMPAYFAKSATIYNPVIYVFM. Residue Lys-309 is modified to N6-(retinylidene)lysine. Residues 323–357 lie on the Cytoplasmic side of the membrane; the sequence is NRQFRVCIMQLFGKKVDDGSEVSTSKTEVSSVAPA.

The protein belongs to the G-protein coupled receptor 1 family. Opsin subfamily. Post-translationally, phosphorylated on some or all of the serine and threonine residues present in the C-terminal region. Retinal double cone principal photoreceptor cell outer segments.

It is found in the membrane. In terms of biological role, visual pigments are the light-absorbing molecules that mediate vision. They consist of an apoprotein, opsin, covalently linked to cis-retinal. The polypeptide is Red-sensitive opsin-1 (opn1lw1) (Danio rerio (Zebrafish)).